We begin with the raw amino-acid sequence, 351 residues long: MSENGDCEHQTSSGFPSIEQMLASSPGKTPISLLQEYGTRVGKTPVYDLLKAEGQAHQPNFTFRVSVGDINCTGQGPSKKAAKHKAAEVALSLLKEGEMFGVMCEENSVVLSVEQPAELKEVADVSPPPTTRNHTIEMKPPLSAQQSECNPVGALQELVVQKGWRLPEYTVTQESGPAHRKEFTMTCRVERFLEIGSGTSKKLAKRNAAAKMLLQIHQVPAEHRESGETEPEEDQFSVGKLDGSRSRGTACTWDSLRNSSGEKILHLRSNPLTILSSGFCSLLQDLSEEQSFQISYLDIDERSLSGLCQCLVELSTQPTTVCHGSATTRDAARANAAHNALQYLKIMAGGK.

Residues 1 to 22 (MSENGDCEHQTSSGFPSIEQML) form a disordered region. 2 consecutive DRBM domains span residues 29 to 96 (TPIS…LLKE) and 150 to 218 (NPVG…QIHQ). The segment at 221 to 243 (AEHRESGETEPEEDQFSVGKLDG) is disordered. Residues 278 to 346 (GFCSLLQDLS…AHNALQYLKI (69 aa)) enclose the DRBM 3 domain.

Belongs to the TARBP2 family. In terms of assembly, self-associates. Component of the RISC loading complex (RLC), or micro-RNA (miRNA) loading complex (miRLC), which is composed of dicer1, ago2 and tarbp2. Note that the trimeric RLC/miRLC is also referred to as RISC.

Its subcellular location is the cytoplasm. In terms of biological role, required for formation of the RNA induced silencing complex (RISC). Component of the RISC loading complex (RLC), also known as the micro-RNA (miRNA) loading complex (miRLC), which is composed of dicer1, ago2 and tarbp2. Within the RLC/miRLC, dicer1 and tarbp2 are required to process precursor miRNAs (pre-miRNAs) to mature miRNAs and then load them onto ago2. ago2 bound to the mature miRNA constitutes the minimal RISC and may subsequently dissociate from dicer1 and tarbp2. May also play a role in the production of short interfering RNAs (siRNAs) from double-stranded RNA (dsRNA) by dicer1. This is RISC-loading complex subunit tarbp2 (tarbp2) from Xenopus laevis (African clawed frog).